A 199-amino-acid chain; its full sequence is Chromophore lyase CpcT/CpeT 2 (199 aa).

This sequence belongs to the CpcT/CpeT biliprotein lyase family.

Covalently attaches a chromophore to Cys residue(s) of phycobiliproteins. This chain is Chromophore lyase CpcT/CpeT 2, found in Synechococcus sp. (strain JA-3-3Ab) (Cyanobacteria bacterium Yellowstone A-Prime).